We begin with the raw amino-acid sequence, 367 residues long: Chorismate synthase (367 aa).

Residue arginine 48 coordinates NADP(+). FMN is bound by residues 125-127 (RSS), 243-244 (NA), glycine 283, 298-302 (KPTSS), and arginine 324.

This sequence belongs to the chorismate synthase family. Homotetramer. FMNH2 is required as a cofactor.

It carries out the reaction 5-O-(1-carboxyvinyl)-3-phosphoshikimate = chorismate + phosphate. The protein operates within metabolic intermediate biosynthesis; chorismate biosynthesis; chorismate from D-erythrose 4-phosphate and phosphoenolpyruvate: step 7/7. Its function is as follows. Catalyzes the anti-1,4-elimination of the C-3 phosphate and the C-6 proR hydrogen from 5-enolpyruvylshikimate-3-phosphate (EPSP) to yield chorismate, which is the branch point compound that serves as the starting substrate for the three terminal pathways of aromatic amino acid biosynthesis. This reaction introduces a second double bond into the aromatic ring system. This is Chorismate synthase from Psychrobacter arcticus (strain DSM 17307 / VKM B-2377 / 273-4).